A 159-amino-acid chain; its full sequence is uncharacterized protein (159 aa).

Residues 1–20 (MKKIIAMSLLMFSVVMSVNA) form the signal peptide.

This is an uncharacterized protein from Pasteurella multocida (strain Pm70).